The primary structure comprises 379 residues: Galactose-1-phosphate uridylyltransferase (379 aa).

Residues 1 to 15 (MSQSGADPEQRQQAS) show a composition bias toward polar residues. Residues 1–20 (MSQSGADPEQRQQASEADAM) form a disordered region. C75 is a binding site for Zn(2+). Residues A81, 97–98 (ND), and N173 contribute to the UDP-alpha-D-glucose site. H184 contacts Zn(2+). Catalysis depends on H186, which acts as the Tele-UMP-histidine intermediate. Residue Q188 participates in UDP-alpha-D-glucose binding. Zn(2+) contacts are provided by E202, H301, H319, and H321. UDP-alpha-D-glucose is bound by residues 334 to 337 (KFMV) and 339 to 340 (YE).

This sequence belongs to the galactose-1-phosphate uridylyltransferase type 1 family. Homodimer. It depends on Zn(2+) as a cofactor.

The catalysed reaction is alpha-D-galactose 1-phosphate + UDP-alpha-D-glucose = alpha-D-glucose 1-phosphate + UDP-alpha-D-galactose. The protein operates within carbohydrate metabolism; galactose metabolism. Plays an important role in galactose metabolism. This chain is Galactose-1-phosphate uridylyltransferase (Galt), found in Rattus norvegicus (Rat).